Consider the following 31-residue polypeptide: Cytochrome b6-f complex subunit 6 (31 aa).

A helical membrane pass occupies residues 4-26 (ITSYFGFLLAALTITSALLIGLN).

It belongs to the PetL family. In terms of assembly, the 4 large subunits of the cytochrome b6-f complex are cytochrome b6, subunit IV (17 kDa polypeptide, PetD), cytochrome f and the Rieske protein, while the 4 small subunits are PetG, PetL, PetM and PetN. The complex functions as a dimer.

The protein resides in the plastid. It localises to the chloroplast thylakoid membrane. In terms of biological role, component of the cytochrome b6-f complex, which mediates electron transfer between photosystem II (PSII) and photosystem I (PSI), cyclic electron flow around PSI, and state transitions. PetL is important for photoautotrophic growth as well as for electron transfer efficiency and stability of the cytochrome b6-f complex. The chain is Cytochrome b6-f complex subunit 6 from Amborella trichopoda.